Here is a 182-residue protein sequence, read N- to C-terminus: Isopentenyl-diphosphate Delta-isomerase (182 aa).

Residues His-25 and His-32 each coordinate Mn(2+). The region spanning 30-164 is the Nudix hydrolase domain; sequence LLHLAFSSWL…PWAFSPWMVM (135 aa). The active site involves Cys-67. Mn(2+) is bound at residue His-69. Glu-87 is a Mg(2+) binding site. Mn(2+) contacts are provided by Glu-114 and Glu-116. Glu-116 is a catalytic residue.

It belongs to the IPP isomerase type 1 family. As to quaternary structure, homodimer. Mg(2+) is required as a cofactor. Requires Mn(2+) as cofactor.

The protein localises to the cytoplasm. It catalyses the reaction isopentenyl diphosphate = dimethylallyl diphosphate. It participates in isoprenoid biosynthesis; dimethylallyl diphosphate biosynthesis; dimethylallyl diphosphate from isopentenyl diphosphate: step 1/1. Catalyzes the 1,3-allylic rearrangement of the homoallylic substrate isopentenyl (IPP) to its highly electrophilic allylic isomer, dimethylallyl diphosphate (DMAPP). The polypeptide is Isopentenyl-diphosphate Delta-isomerase (Escherichia coli O7:K1 (strain IAI39 / ExPEC)).